We begin with the raw amino-acid sequence, 161 residues long: MSSFTHFNDQGRAKMVDISDKKATVRTAIACSSIVVTKEIYDKISHNEIGKGDVLAVAQIAGIMAAKRTSDIIPMCHPLLLKGVDVSFDWKQSEEQYRLLIEVKVKTEGSTGVEMEALTAASATALTVYDMCKAVDKGMIIGETYLLEKTGGKSGDYTRNS.

Substrate-binding positions include 75 to 77 and 115 to 116; these read MCH and ME. Residue Asp130 is part of the active site.

Belongs to the MoaC family. Homohexamer; trimer of dimers.

The catalysed reaction is (8S)-3',8-cyclo-7,8-dihydroguanosine 5'-triphosphate = cyclic pyranopterin phosphate + diphosphate. The protein operates within cofactor biosynthesis; molybdopterin biosynthesis. In terms of biological role, catalyzes the conversion of (8S)-3',8-cyclo-7,8-dihydroguanosine 5'-triphosphate to cyclic pyranopterin monophosphate (cPMP). This is Cyclic pyranopterin monophosphate synthase from Bacillus cereus (strain G9842).